Reading from the N-terminus, the 577-residue chain is Cleavage stimulation factor subunit 2 (577 aa).

Position 14 is a phosphoserine (S14). The region spanning 16–94 is the RRM domain; that stretch reads RSVFVGNIPY…RALRVDNAAS (79 aa). Residues 108–248 form an interactions with CSTF3 and SYMPK region; that stretch reads APVIESPYGE…VNGAPPLMQA (141 aa). A Glycyl lysine isopeptide (Lys-Gly) (interchain with G-Cter in SUMO2) cross-link involves residue K189. The interval 206–243 is disordered; sequence QPVHGAGPGSGSNVSMNQQNPQAPQAQSLGGMHVNGAP. The segment covering 222–232 has biased composition (low complexity); the sequence is NQQNPQAPQAQ. The residue at position 308 (R308) is an Omega-N-methylarginine. The disordered stretch occupies residues 340–409; sequence EVEPRGYLGP…DGRGGRDPRG (70 aa). Over residues 360–373 the composition is skewed to basic and acidic residues; the sequence is PGHESRGPPPHELR. The stretch at 410–414 is one 1; approximate repeat; the sequence is IDARG. The interval 410–469 is 12 X 5 AA tandem repeats of M-E-A-R-[AG]; it reads IDARGMEARAMEARGLDARGLEARAMEARAMEARAMEARAMEARAMEVRGMEARGMDTRG. A run of 2 repeats spans residues 415-419 and 420-424. The 4; approximate repeat unit spans residues 425–429; that stretch reads LDARG. One copy of the 5; approximate repeat lies at 430 to 434; the sequence is LEARA. A run of 4 repeats spans residues 435 to 439, 440 to 444, 445 to 449, and 450 to 454. Residues 455–459 form a 10; approximate repeat; that stretch reads MEVRG. The stretch at 460–464 is repeat 11; it reads MEARG. A 12; approximate repeat occupies 465–469; it reads MDTRG. Residues R468 and R475 each carry the omega-N-methylarginine modification. Residues 508-532 form a disordered region; that stretch reads GMQGASIQGGSQPGGFSPGQNQVTP. The tract at residues 514 to 577 is interaction with RPO2TC1; that stretch reads IQGGSQPGGF…EQIQKSTGAP (64 aa). Phosphoserine occurs at positions 518 and 524.

The CSTF complex is composed of CSTF1 (50 kDa subunit), CSTF2 (64 kDa subunit) and CSTF3 (77 kDa subunit). CSTF2 directly interacts with CSTF3, SYMPK and RPO2TC1. Interacts with HSF1 in heat-stressed cells. Interacts with CPSF2, CPSF3 and FIP1L1. Interacts with DDX1.

The protein resides in the nucleus. Functionally, one of the multiple factors required for polyadenylation and 3'-end cleavage of mammalian pre-mRNAs. This subunit is directly involved in the binding to pre-mRNAs. This is Cleavage stimulation factor subunit 2 (CSTF2) from Homo sapiens (Human).